Reading from the N-terminus, the 71-residue chain is AENFYYVILYLMVMIGMFSFIIVAILVSTVKSKRREHSNDPYHQYIVEDWQEKYKSQILHFEEAKATIHEN.

A helical transmembrane segment spans residues 7 to 27 (VILYLMVMIGMFSFIIVAILV). The Cytoplasmic portion of the chain corresponds to 28-71 (STVKSKRREHSNDPYHQYIVEDWQEKYKSQILHFEEAKATIHEN).

It belongs to the potassium channel KCNE family. In terms of assembly, interacts with KCNB1. Associates with KCNH2/ERG1. May associate with KCNQ2 and KCNQ3. Associates with HCN1 and probably HCN2. Heteromultimer with KCNC2. Interacts with KCNC2. Interacts with KCNQ1; forms a heterooligomer complex that targets to the membrane raft and leading to currents with an apparently instantaneous activation, a rapid deactivation process and a linear current-voltage relationship and decreases the amplitude of the outward current. In terms of tissue distribution, detected in heart; expression is highest in the SA node and the right atrium, and barely detectable in the ventricle.

The protein localises to the cell membrane. It localises to the apical cell membrane. Its function is as follows. Ancillary protein that functions as a regulatory subunit of the voltage-gated potassium (Kv) channel complex composed of pore-forming and potassium-conducting alpha subunits and of regulatory beta subunits. KCNE2 beta subunit modulates the gating kinetics and enhances stability of the channel complex. Alters the gating of the delayed rectifier Kv channel containing KCNB1 alpha subunit. Associates with KCNH2/HERG alpha subunit Kv channel to form the rapidly activating component of the delayed rectifying potassium current (IKr) in heart. May associate with KCNQ2 and/or KCNQ3 alpha subunits to modulate the native M-type current. May associate with HCN1 and HCN2 channel subunits to increase potassium current. Forms a heterooligomer complex with KCNQ1/KVLQT1 alpha subunits which leads to currents with an apparently instantaneous activation, a rapid deactivation process and a linear current-voltage relationship and decreases the amplitude of the outward current. KCNQ1-KCNE2 channel associates with Na(+)-coupled myo-inositol symporter in the apical membrane of choroid plexus epithelium and regulates the myo-inositol gradient between blood and cerebrospinal fluid with an impact on neuron excitability. This chain is Potassium voltage-gated channel subfamily E member 2 (KCNE2), found in Oryctolagus cuniculus (Rabbit).